The following is a 229-amino-acid chain: 2-C-methyl-D-erythritol 4-phosphate cytidylyltransferase (229 aa).

It belongs to the IspD/TarI cytidylyltransferase family. IspD subfamily.

It catalyses the reaction 2-C-methyl-D-erythritol 4-phosphate + CTP + H(+) = 4-CDP-2-C-methyl-D-erythritol + diphosphate. Its pathway is isoprenoid biosynthesis; isopentenyl diphosphate biosynthesis via DXP pathway; isopentenyl diphosphate from 1-deoxy-D-xylulose 5-phosphate: step 2/6. In terms of biological role, catalyzes the formation of 4-diphosphocytidyl-2-C-methyl-D-erythritol from CTP and 2-C-methyl-D-erythritol 4-phosphate (MEP). This is 2-C-methyl-D-erythritol 4-phosphate cytidylyltransferase from Neisseria meningitidis serogroup B (strain ATCC BAA-335 / MC58).